We begin with the raw amino-acid sequence, 107 residues long: Protein RnfH (107 aa).

Residues 82 to 107 are disordered; that stretch reads ARRKRAEKAKEEGRANKVTGGRPIER.

This sequence belongs to the UPF0125 (RnfH) family.

The protein is Protein RnfH of Pseudoalteromonas translucida (strain TAC 125).